An 850-amino-acid polypeptide reads, in one-letter code: MPSYLTRQKTRKIFSWVGRPLPDRKHNHQIYKEMRMKVNDCSTEIHIKVGQFVLIKGNNNAKPYVAKLIELFEDGSKFHSKKCARVQWCVRFSEIPISKRHLLGRKPAAQEIFWYDDPDCGNNICVETIIGPVQVVALAPDEVIPMDQKSEDTLFVKLSWNTKNFEPLSPEVLAALKKLEDSPKCQKPLEGKSKNVKNPSWNATEQMVKRIESSHSTSKSCQTSAHPVSPNARKPLELSDSDIPRKPNMRLSQKILCDSLDSQKNSKRKTAFSETASPPKRCQPGEIKNLSPLKTLEKNGQAHSFCDKGSMILRAQDPSFITTKISMERALDPVRSRLRPSVMLTSILTPKRTGREAGKQEAHTEPTRTSHRVHRRSSLLTLNRIRQQLWLLDDDKSDQEEEESISSAEVSDSTSEEEDDSIPSLLKRNSQPQSRNRRMASKPSLQTPSKTPKKTTHHPTPQIRGRNIAVQEPTSVLEEARLMLHVSAVPDSLPCREQEFQDIYSFVESKLLDGTGGCMYISGVPGTGKTATVNEVIRCLQQAAQTNDVPPFEYVDVNGMKLTEPHQVYVQILQKLTGQKATANHAAQLLAKRFCSQGSQQETTVLLVDELDLLWTSKQDVMYNLFDWPTHKGARLIVLAIANTMDLPERIMMNRVSSRLGLTRMSFQPYSHNQLKEILVSRLKHLKAFEDDAIQLVARKVAALSGDARRCLDICRRATEICELSHNHGNSLGPVTVSHLMEAIDEMFSSSYITAIKNCSLLEQGFLRAIIAEFRRSGLEEATFQQIYSQHVALCRMEGLPYPTMSETMAVCSNLGSCRLLLVEPSRNDLLLRVRLNVSQDDVLYALKEE.

One can recognise a BAH domain in the interval 45–171 (IHIKVGQFVL…TKNFEPLSPE (127 aa)). Positions 209-286 (KRIESSHSTS…SPPKRCQPGE (78 aa)) are disordered. Over residues 214–224 (SHSTSKSCQTS) the composition is skewed to low complexity. Basic and acidic residues predominate over residues 234 to 245 (KPLELSDSDIPR). A phosphoserine mark is found at S259, S277, and S291. Disordered regions lie at residues 349–376 (TPKRTGREAGKQEAHTEPTRTSHRVHRR) and 393–469 (DDDK…RNIA). Over residues 353 to 368 (TGREAGKQEAHTEPTR) the composition is skewed to basic and acidic residues. Positions 395-404 (DKSDQEEEES) are enriched in acidic residues. At S411 the chain carries Phosphoserine. ATP is bound by residues V489 and 523-531 (GVPGTGKTA). The Mg(2+) site is built by D609 and E610. ATP contacts are provided by E610, N643, and R709.

This sequence belongs to the ORC1 family. In terms of assembly, component of ORC, a complex composed of at least 6 subunits: ORC1, ORC2, ORC3, ORC4, ORC5 and ORC6. ORC is regulated in a cell-cycle dependent manner. It is sequentially assembled at the exit from anaphase of mitosis and disassembled as cells enter S phase. Interacts with CDC6 and KAT7/HBO1. Interacts with LRWD1 predominantly during the G1 phase and with less affinity during mitosis, when phosphorylated. In terms of processing, phosphorylated during mitosis.

The protein localises to the nucleus. In terms of biological role, component of the origin recognition complex (ORC) that binds origins of replication. DNA-binding is ATP-dependent. The specific DNA sequences that define origins of replication have not been identified yet. ORC is required to assemble the pre-replication complex necessary to initiate DNA replication. The polypeptide is Origin recognition complex subunit 1 (ORC1) (Cricetulus griseus (Chinese hamster)).